Consider the following 506-residue polypeptide: Maturase K (506 aa).

It belongs to the intron maturase 2 family. MatK subfamily.

The protein resides in the plastid. The protein localises to the chloroplast. Usually encoded in the trnK tRNA gene intron. Probably assists in splicing its own and other chloroplast group II introns. This Austrosteenisia blackii (Blood vine) protein is Maturase K.